The sequence spans 740 residues: Gramillins biosynthetic cluster protein FGSG_11657 (740 aa).

Disordered stretches follow at residues 353-391 (QADSPVPLSSVKEESGLGKLARSPAEPAPSRPLPGSSIP), 414-434 (SKLSDEAEADTSIKPDSDAAS), 514-535 (PKEQEEPKRHRTSNNSIVGSSD), and 656-686 (EHEGEGRADTNRHVSTQSNMPTEQSLLPQGD). Positions 656-667 (EHEGEGRADTNR) are enriched in basic and acidic residues. Residues 668-682 (HVSTQSNMPTEQSLL) show a composition bias toward polar residues.

It participates in mycotoxin biosynthesis. In terms of biological role, part of the gene cluster that mediates the biosynthesis of gramillins A and B, bicyclic lipopeptides that induce cell death in maize leaves but not in wheat leaves. The nonribosomal peptide synthetase GRA1 incorporates respectively a glutamic adic (Glu), a leucine (Leu), a serine (Ser), a hydroxyglutamine (HOGln), a 2-amino decanoic acid, and 2 cysteins (CysB and CysA). The biosynthesis of 2-amino decanoic acid incorporated in gramillins could be initiated by a fatty acid synthase composed of the alpha and beta subunits FGSG_00036 and FGSG_11656. The cytochrome P450 monooxygenase FGSG_15680 could hydroxylate the fatty acid chain. Subsequent oxidation to the ketone by the oxidoreductase FGSG_00048 and transamination by aminotransferase FGSG_00049 could form 2-amino-decanoic acid. On the other hand, FGSG_15680 could also be responsible for the HO-modified glutamine at the gamma-position. Whether hydroxylation occurs on the fully assembled product or on the Gln residue prior to assembly into the gramillins requires further proof. The thioredoxin FGSG_00043 could also be required for the disulfide-bond formation between CysA and CysB. The specific involvement of the remaining proteins from the cluster is more difficult to discern, but could have broader regulatory (FGSG_00040 and FGSG_11657) or enzymatic functions (FGSG_00044 and FGSG_00045). The final C-domain of GRA1 does not possess the expected sequence of a termination CT domain, often implicated in macrocyclization and release of a cyclopeptidein fungal NRPs; and the thioesterase FGSG_00047 may act in concert with the terminal C-domain of GRA1 to catalyze the formation of the macrocyclic anhydride and release of the products. In Gibberella zeae (strain ATCC MYA-4620 / CBS 123657 / FGSC 9075 / NRRL 31084 / PH-1) (Wheat head blight fungus), this protein is Gramillins biosynthetic cluster protein FGSG_11657.